Consider the following 56-residue polypeptide: Conotoxin reg3.9 (56 aa).

The signal sequence occupies residues 1-8; that stretch reads LLFPLSAL. Positions 1–22 are disordered; sequence LLFPLSALPLDGDQPADQPAER. Positions 9 to 40 are excised as a propeptide; the sequence is PLDGDQPADQPAERMQDISPEQNFWFDLVERG. Disulfide bonds link C41–C55, C42–C53, and C47–C56.

Belongs to the conotoxin M superfamily. Expressed by the venom duct.

The protein resides in the secreted. The sequence is that of Conotoxin reg3.9 from Conus regius (Crown cone).